We begin with the raw amino-acid sequence, 51 residues long: MWKVNDQGFLNITVAGTKFNLIATSTKIGFYTDPPSHLIIIPLKIFPLPPK.

N-linked (GlcNAc...) asparagine; by host glycosylation is present at Asn-11.

This sequence belongs to the asfivirus I177L family.

The protein resides in the virion. In Ornithodoros (relapsing fever ticks), this protein is Protein I177L.